Consider the following 445-residue polypeptide: Exodeoxyribonuclease 7 large subunit (445 aa).

This sequence belongs to the XseA family. In terms of assembly, heterooligomer composed of large and small subunits.

It is found in the cytoplasm. The catalysed reaction is Exonucleolytic cleavage in either 5'- to 3'- or 3'- to 5'-direction to yield nucleoside 5'-phosphates.. Functionally, bidirectionally degrades single-stranded DNA into large acid-insoluble oligonucleotides, which are then degraded further into small acid-soluble oligonucleotides. The sequence is that of Exodeoxyribonuclease 7 large subunit from Shewanella pealeana (strain ATCC 700345 / ANG-SQ1).